The chain runs to 320 residues: tRNA dimethylallyltransferase (320 aa).

An ATP-binding site is contributed by 5–12; sequence GPTAVGKS. 7 to 12 provides a ligand contact to substrate; sequence TAVGKS. Residues 30–33 form an interaction with substrate tRNA region; the sequence is DSMQ.

It belongs to the IPP transferase family. As to quaternary structure, monomer. Mg(2+) is required as a cofactor.

The enzyme catalyses adenosine(37) in tRNA + dimethylallyl diphosphate = N(6)-dimethylallyladenosine(37) in tRNA + diphosphate. Functionally, catalyzes the transfer of a dimethylallyl group onto the adenine at position 37 in tRNAs that read codons beginning with uridine, leading to the formation of N6-(dimethylallyl)adenosine (i(6)A). The polypeptide is tRNA dimethylallyltransferase (Heliobacterium modesticaldum (strain ATCC 51547 / Ice1)).